Reading from the N-terminus, the 266-residue chain is Hydroxyethylthiazole kinase (266 aa).

Substrate is bound at residue Met46. ATP-binding residues include Arg122 and Ser168. Gly195 lines the substrate pocket.

It belongs to the Thz kinase family. The cofactor is Mg(2+).

It carries out the reaction 5-(2-hydroxyethyl)-4-methylthiazole + ATP = 4-methyl-5-(2-phosphooxyethyl)-thiazole + ADP + H(+). It functions in the pathway cofactor biosynthesis; thiamine diphosphate biosynthesis; 4-methyl-5-(2-phosphoethyl)-thiazole from 5-(2-hydroxyethyl)-4-methylthiazole: step 1/1. Its function is as follows. Catalyzes the phosphorylation of the hydroxyl group of 4-methyl-5-beta-hydroxyethylthiazole (THZ). The chain is Hydroxyethylthiazole kinase from Oleidesulfovibrio alaskensis (strain ATCC BAA-1058 / DSM 17464 / G20) (Desulfovibrio alaskensis).